A 463-amino-acid chain; its full sequence is Succinate--CoA ligase [ADP-forming] subunit beta, mitochondrial (463 aa).

Residues M1–L53 constitute a mitochondrion transit peptide. Residues M61–I288 enclose the ATP-grasp domain. At K78 the chain carries N6-acetyllysine. At Y84 the chain carries Phosphotyrosine. K88 carries the post-translational modification N6-acetyllysine; alternate. An N6-succinyllysine; alternate modification is found at K88. ATP is bound by residues K98 and G105–G107. An N6-acetyllysine mark is found at K129, K139, K143, and K216. 2 residues coordinate Mg(2+): N258 and D272. Phosphoserine is present on S279. N323 is a binding site for substrate. T341 carries the phosphothreonine modification. K368 carries the post-translational modification N6-acetyllysine. G380–M382 contributes to the substrate binding site.

It belongs to the succinate/malate CoA ligase beta subunit family. ATP-specific subunit beta subfamily. Heterodimer of an alpha and a beta subunit. The beta subunit determines specificity for ATP. Interacts with ALAS2. Requires Mg(2+) as cofactor.

It localises to the mitochondrion. The catalysed reaction is succinate + ATP + CoA = succinyl-CoA + ADP + phosphate. It functions in the pathway carbohydrate metabolism; tricarboxylic acid cycle; succinate from succinyl-CoA (ligase route): step 1/1. In terms of biological role, ATP-specific succinyl-CoA synthetase functions in the citric acid cycle (TCA), coupling the hydrolysis of succinyl-CoA to the synthesis of ATP and thus represents the only step of substrate-level phosphorylation in the TCA. The beta subunit provides nucleotide specificity of the enzyme and binds the substrate succinate, while the binding sites for coenzyme A and phosphate are found in the alpha subunit. This chain is Succinate--CoA ligase [ADP-forming] subunit beta, mitochondrial, found in Macaca fascicularis (Crab-eating macaque).